The primary structure comprises 144 residues: Eukaryotic translation initiation factor 1A (144 aa).

The segment covering 1 to 15 has biased composition (basic residues); sequence MPKNKGKGGKNRRRG. Disordered stretches follow at residues 1–26 and 114–144; these read MPKN…KREL and KINE…IDDI. The segment covering 16 to 26 has biased composition (basic and acidic residues); that stretch reads KNENESEKREL. Residues 22-96 form the S1-like domain; it reads EKRELVFKED…NKADVILKYN (75 aa). The span at 124 to 144 shows a compositional bias: acidic residues; it reads GDDDEIQFDDIGDDDEDIDDI.

The protein belongs to the eIF-1A family. In terms of assembly, component of the 43S pre-initiation complex (43S PIC), which is composed of the 40S ribosomal subunit, EIF1, eIF1A (EIF1AX), eIF3 complex, EIF5 and eIF2-GTP-initiator tRNA complex (eIF2 ternary complex). Interacts with EIF5; this interaction contributes to the maintenance of EIF1 within the open 43S PIC. Interacts through its C-terminal domain (CTD) with the CTD of EIF5B; from the location of the start codon by the 43S complex until the formation of the 80S complex.

It is found in the cytoplasm. In terms of biological role, component of the 43S pre-initiation complex (43S PIC), which binds to the mRNA cap-proximal region, scans mRNA 5'-untranslated region, and locates the initiation codon. This protein enhances formation of the cap-proximal complex. Together with EIF1, facilitates scanning, start codon recognition, promotion of the assembly of 48S complex at the initiation codon (43S PIC becomes 48S PIC after the start codon is reached), and dissociation of aberrant complexes. After start codon location, together with EIF5B orients the initiator methionine-tRNA in a conformation that allows 60S ribosomal subunit joining to form the 80S initiation complex. Is released after 80S initiation complex formation, just after GTP hydrolysis by EIF5B, and before release of EIF5B. Its globular part is located in the A site of the 40S ribosomal subunit. Its interaction with EIF5 during scanning contribute to the maintenance of EIF1 within the open 43S PIC. In contrast to yeast orthologs, does not bind EIF1. This Mus musculus (Mouse) protein is Eukaryotic translation initiation factor 1A (Eif1a).